The primary structure comprises 200 residues: UPF0316 protein Mhun_0543 (200 aa).

The next 3 helical transmembrane spans lie at 3–23, 44–64, and 71–91; these read VGFL…IFLA, FIAP…IGQV, and PICY…GMEL.

It belongs to the UPF0316 family.

Its subcellular location is the cell membrane. The polypeptide is UPF0316 protein Mhun_0543 (Methanospirillum hungatei JF-1 (strain ATCC 27890 / DSM 864 / NBRC 100397 / JF-1)).